A 223-amino-acid polypeptide reads, in one-letter code: Deoxyribose-phosphate aldolase (223 aa).

The Proton donor/acceptor role is filled by Asp-89. Lys-152 functions as the Schiff-base intermediate with acetaldehyde in the catalytic mechanism. Lys-181 serves as the catalytic Proton donor/acceptor.

The protein belongs to the DeoC/FbaB aldolase family. DeoC type 1 subfamily.

It is found in the cytoplasm. The enzyme catalyses 2-deoxy-D-ribose 5-phosphate = D-glyceraldehyde 3-phosphate + acetaldehyde. The protein operates within carbohydrate degradation; 2-deoxy-D-ribose 1-phosphate degradation; D-glyceraldehyde 3-phosphate and acetaldehyde from 2-deoxy-alpha-D-ribose 1-phosphate: step 2/2. Functionally, catalyzes a reversible aldol reaction between acetaldehyde and D-glyceraldehyde 3-phosphate to generate 2-deoxy-D-ribose 5-phosphate. The polypeptide is Deoxyribose-phosphate aldolase (Listeria welshimeri serovar 6b (strain ATCC 35897 / DSM 20650 / CCUG 15529 / CIP 8149 / NCTC 11857 / SLCC 5334 / V8)).